We begin with the raw amino-acid sequence, 453 residues long: Charged multivesicular body protein 7 (453 aa).

Residues 1 to 22 (MWSPEREAEAPAGGDPAGLLPP) form a disordered region. Residues 10 to 22 (APAGGDPAGLLPP) show a composition bias toward low complexity. Serine 232 is subject to Phosphoserine. Positions 243-312 (QLMQSEQLLS…DTVQGILDRI (70 aa)) form a coiled coil. The segment covering 392–403 (TKEPLDLPDNPR) has biased composition (basic and acidic residues). Disordered stretches follow at residues 392–417 (TKEP…PRIS) and 431–453 (SEGG…LKPL). Threonine 408 is modified (phosphothreonine). A phosphoserine mark is found at serine 410, serine 417, serine 431, and serine 441.

Belongs to the SNF7 family. Interacts with CHMP4B, but not with VPS25. Interacts with LEMD2 (via C-terminus).

It is found in the cytoplasm. It localises to the nucleus envelope. Functionally, ESCRT-III-like protein required to recruit the ESCRT-III complex to the nuclear envelope (NE) during late anaphase. Together with SPAST, the ESCRT-III complex promotes NE sealing and mitotic spindle disassembly during late anaphase. Recruited to the reforming NE during anaphase by LEMD2. Plays a role in the endosomal sorting pathway. The protein is Charged multivesicular body protein 7 (CHMP7) of Homo sapiens (Human).